The following is a 448-amino-acid chain: Argininosuccinate synthase (448 aa).

ATP-binding positions include 17-25 (AFSGGLDTS) and Ala43. Residue Tyr99 coordinates L-citrulline. ATP is bound by residues Gly129 and Thr131. 3 residues coordinate L-aspartate: Thr131, Asn135, and Asp136. Asn135 lines the L-citrulline pocket. Asp136 contacts ATP. 2 residues coordinate L-citrulline: Arg139 and Ser192. Residue Asp194 coordinates ATP. 3 residues coordinate L-citrulline: Thr201, Glu203, and Glu280.

Belongs to the argininosuccinate synthase family. Type 2 subfamily. Homotetramer.

The protein resides in the cytoplasm. It catalyses the reaction L-citrulline + L-aspartate + ATP = 2-(N(omega)-L-arginino)succinate + AMP + diphosphate + H(+). It functions in the pathway amino-acid biosynthesis; L-arginine biosynthesis; L-arginine from L-ornithine and carbamoyl phosphate: step 2/3. In Bradyrhizobium sp. (strain ORS 278), this protein is Argininosuccinate synthase.